A 95-amino-acid chain; its full sequence is Signal recognition particle 19 kDa protein (95 aa).

It belongs to the SRP19 family. In terms of assembly, part of the signal recognition particle protein translocation system, which is composed of SRP and FtsY. Archaeal SRP consists of a 7S RNA molecule of 300 nucleotides and two protein subunits: SRP54 and SRP19.

It localises to the cytoplasm. Involved in targeting and insertion of nascent membrane proteins into the cytoplasmic membrane. Binds directly to 7S RNA and mediates binding of the 54 kDa subunit of the SRP. This Desulfurococcus amylolyticus (strain DSM 18924 / JCM 16383 / VKM B-2413 / 1221n) (Desulfurococcus kamchatkensis) protein is Signal recognition particle 19 kDa protein.